The sequence spans 343 residues: Phosphate acyltransferase (343 aa).

This sequence belongs to the PlsX family. As to quaternary structure, homodimer. Probably interacts with PlsY.

The protein resides in the cytoplasm. The enzyme catalyses a fatty acyl-[ACP] + phosphate = an acyl phosphate + holo-[ACP]. The protein operates within lipid metabolism; phospholipid metabolism. Functionally, catalyzes the reversible formation of acyl-phosphate (acyl-PO(4)) from acyl-[acyl-carrier-protein] (acyl-ACP). This enzyme utilizes acyl-ACP as fatty acyl donor, but not acyl-CoA. The sequence is that of Phosphate acyltransferase from Neorickettsia sennetsu (strain ATCC VR-367 / Miyayama) (Ehrlichia sennetsu).